We begin with the raw amino-acid sequence, 322 residues long: Biotin synthase (322 aa).

One can recognise a Radical SAM core domain in the interval N39–R266. Residues C54, C58, and C61 each coordinate [4Fe-4S] cluster. The [2Fe-2S] cluster site is built by C98, C129, C189, and R261.

This sequence belongs to the radical SAM superfamily. Biotin synthase family. As to quaternary structure, homodimer. Requires [4Fe-4S] cluster as cofactor. [2Fe-2S] cluster is required as a cofactor.

It carries out the reaction (4R,5S)-dethiobiotin + (sulfur carrier)-SH + 2 reduced [2Fe-2S]-[ferredoxin] + 2 S-adenosyl-L-methionine = (sulfur carrier)-H + biotin + 2 5'-deoxyadenosine + 2 L-methionine + 2 oxidized [2Fe-2S]-[ferredoxin]. The protein operates within cofactor biosynthesis; biotin biosynthesis; biotin from 7,8-diaminononanoate: step 2/2. In terms of biological role, catalyzes the conversion of dethiobiotin (DTB) to biotin by the insertion of a sulfur atom into dethiobiotin via a radical-based mechanism. The sequence is that of Biotin synthase from Vesicomyosocius okutanii subsp. Calyptogena okutanii (strain HA).